Reading from the N-terminus, the 301-residue chain is Acetylglutamate kinase (301 aa).

Residues 76–77 (GG), R98, and N192 contribute to the substrate site.

The protein belongs to the acetylglutamate kinase family. ArgB subfamily.

The protein resides in the cytoplasm. The catalysed reaction is N-acetyl-L-glutamate + ATP = N-acetyl-L-glutamyl 5-phosphate + ADP. The protein operates within amino-acid biosynthesis; L-arginine biosynthesis; N(2)-acetyl-L-ornithine from L-glutamate: step 2/4. In terms of biological role, catalyzes the ATP-dependent phosphorylation of N-acetyl-L-glutamate. In Chlorobaculum parvum (strain DSM 263 / NCIMB 8327) (Chlorobium vibrioforme subsp. thiosulfatophilum), this protein is Acetylglutamate kinase.